A 403-amino-acid polypeptide reads, in one-letter code: Tripartite motif-containing protein 59 (403 aa).

An RING-type zinc finger spans residues 10-60; the sequence is CPICYSIFEDPRVLPCSHTFCRNCLENVLQASGNFYIWRPLRIPLKCPNCR. The B box-type zinc-finger motif lies at 92-134; sequence PDVVTCPEHYRQPLNVYCLLDKKLVCGHCLTIGQHHGHPIDDL. Cysteine 97, histidine 100, cysteine 120, and histidine 126 together coordinate Zn(2+). Residues 163–246 are a coiled coil; sequence LIEKLEEQKC…TITTSLQDES (84 aa). Residues 329–349 traverse the membrane as a helical segment; that stretch reads ILNIAIVSLISVILMLILLFN.

It belongs to the TRIM/RBCC family. As to quaternary structure, interacts with ECSIT. Moderately expressed in the spleen, brain and heart and very highly expressed in the testis.

The protein localises to the endoplasmic reticulum membrane. It carries out the reaction S-ubiquitinyl-[E2 ubiquitin-conjugating enzyme]-L-cysteine + [acceptor protein]-L-lysine = [E2 ubiquitin-conjugating enzyme]-L-cysteine + N(6)-ubiquitinyl-[acceptor protein]-L-lysine.. It functions in the pathway protein modification; protein ubiquitination. In terms of biological role, E3 ubiquitin ligase involved in different processes such as development and immune response. Serves as a negative regulator for innate immune signaling pathways by suppressing RLR-induced activation of IRF3/7 and NF-kappa-B via interaction with adapter ECSIT. Regulates autophagy through modulating both the transcription and the ubiquitination of BECN1. On the one hand, regulates the transcription of BECN1 through negatively modulating the NF-kappa-B pathway. On the other hand, regulates TRAF6-mediated 'Lys-63'-linked ubiquitination of BECN1, thus affecting the formation of the BECN1-PIK3C3 complex. In addition, mediates 'Lys-48'-linked ubiquitination of TRAF6 and thereby promotes TRAF6 proteasomal degradation. Also acts as a critical regulator for early embryo development from blastocyst stage to gastrula through modulating F-actin assembly and WASH1 'Lys-63'-linked ubiquitination. The chain is Tripartite motif-containing protein 59 (Trim59) from Mus musculus (Mouse).